A 774-amino-acid polypeptide reads, in one-letter code: MTAKPAAAAARATVYGYPRQGPHRELKKAIEGYWKGRVDADALRETAAELRRGTWQQLAEAGVHEVPTGDFSYYDHVLDTSVMVGAVPERHRASVEADALDGYFAMARGTQDVAPLEMTKWFDTNYHYLVPELGPDTVFSADSAKQVAEFREALALGWTPRPVLVGPLTYLLLAKAAPGVAADFEPLTLLDRLLPVYAEILADLRAAGATWVQLDEPALVQDRTPAELNAAARAYRELGGRADRPQLLVASYFGRLGEALAVLAKAPVDGLALDFTESGAGNLDDLAAAGGLPGKRLVAGVVNGRNIWINDYAKSLATLGTLLGLADRVDVSASCSLLHVPLDADAERGIDPETARWLAFAKQKTEEIVVLARGLGSGTDAIASELAANRADLASRTGAALTRDPAVRARTAAVTEADGRRSQPYAERSAAQRAGLGLPLLPTTTIGSFPQTTELRTARAELRAGRIDEAEYEERVKDEIREVLSFQEKAGIDVLVHGEPERNDMVQYFAEQLDGYLATQHGWVQSYGTRYVRPPVLAGDISRPEPMTVRWTTYAQSLTARPVKGMLTGPVTMLAWSFVRDDQPLGDTARQVALALRDEVNDLEANGTSVIQVDEPALRETLPLRAAEHAAYLEWATESFRIATSGVRPDTQIHTHMCYAEFGDIVQAIDDLDADVISLEAARSHMQVARELAAHGYPREAGPGVYDIHSPRIPGAEEAAALLRKGLEAIPAERLWVNPDCGLKTRGWPETRASLENLVAAARQIRAELPTGAA.

5-methyltetrahydropteroyltri-L-glutamate-binding positions include 24–27 and Lys-120; that span reads RELK. L-homocysteine-binding positions include 446 to 448 and Glu-499; that span reads IGS. L-methionine is bound by residues 446–448 and Glu-499; that span reads IGS. Residue Trp-576 participates in 5-methyltetrahydropteroyltri-L-glutamate binding. Asp-614 provides a ligand contact to L-homocysteine. Residue Asp-614 participates in L-methionine binding. 5-methyltetrahydropteroyltri-L-glutamate is bound at residue Glu-620. Residues His-656, Cys-658, and Glu-680 each coordinate Zn(2+). The active-site Proton donor is His-709. Zn(2+) is bound at residue Cys-741.

Belongs to the vitamin-B12 independent methionine synthase family. The cofactor is Zn(2+).

It carries out the reaction 5-methyltetrahydropteroyltri-L-glutamate + L-homocysteine = tetrahydropteroyltri-L-glutamate + L-methionine. The protein operates within amino-acid biosynthesis; L-methionine biosynthesis via de novo pathway; L-methionine from L-homocysteine (MetE route): step 1/1. Catalyzes the transfer of a methyl group from 5-methyltetrahydrofolate to homocysteine resulting in methionine formation. This Streptomyces griseus subsp. griseus (strain JCM 4626 / CBS 651.72 / NBRC 13350 / KCC S-0626 / ISP 5235) protein is 5-methyltetrahydropteroyltriglutamate--homocysteine methyltransferase.